The following is a 283-amino-acid chain: Extracellular metalloprotease MGG_08041 (283 aa).

A signal peptide spans 1 to 22; the sequence is MQINVVKTFLFALAASSVSALA. N-linked (GlcNAc...) asparagine glycosylation is present at Asn55. His197 serves as a coordination point for Zn(2+). The active site involves Glu198. His201 lines the Zn(2+) pocket. A disulfide bridge connects residues Cys233 and Cys260.

Belongs to the peptidase M43B family.

The protein localises to the secreted. In terms of biological role, secreted metalloproteinase that allows assimilation of proteinaceous substrates. This chain is Extracellular metalloprotease MGG_08041, found in Pyricularia oryzae (strain 70-15 / ATCC MYA-4617 / FGSC 8958) (Rice blast fungus).